A 634-amino-acid chain; its full sequence is ABC transporter B family member 29, chloroplastic (634 aa).

A chloroplast-targeting transit peptide spans 1–51 (MSFLLLTPPPCLLIPPPPLSHRRSSSLFLKHPFQPSPRPLSFCKPSALRLR). 6 helical membrane passes run 75-95 (TVLL…QIVP), 119-139 (LVLA…QAFL), 195-215 (LLNT…HMIV), 219-239 (ALTL…AYLG), 307-327 (IVQV…VILA), and 330-350 (SLSS…IDPV). One can recognise an ABC transmembrane type-1 domain in the interval 77–362 (LLGWLCSCVS…LGKAYNELKQ (286 aa)). The ABC transporter domain maps to 396–633 (VELCDISFKY…KDSLTSAGLV (238 aa)). 430-437 (GPSGGGKT) contributes to the ATP binding site.

It belongs to the ABC transporter superfamily. ABCB family. Multidrug resistance exporter (TC 3.A.1.201) subfamily.

The protein resides in the plastid. The protein localises to the chloroplast membrane. The chain is ABC transporter B family member 29, chloroplastic (ABCB29) from Arabidopsis thaliana (Mouse-ear cress).